Here is a 420-residue protein sequence, read N- to C-terminus: Tyrosine--tRNA ligase (420 aa).

Residue Tyr33 participates in L-tyrosine binding. Positions 38–47 (PTGPSLHAGH) match the 'HIGH' region motif. L-tyrosine contacts are provided by Tyr167 and Gln171. Residues 227 to 231 (KFGKS) carry the 'KMSKS' region motif. Lys230 is a binding site for ATP. An S4 RNA-binding domain is found at 352 to 418 (RTIIDLLVAS…GKKNFAGVQI (67 aa)).

This sequence belongs to the class-I aminoacyl-tRNA synthetase family. TyrS type 1 subfamily. In terms of assembly, homodimer.

The protein localises to the cytoplasm. The catalysed reaction is tRNA(Tyr) + L-tyrosine + ATP = L-tyrosyl-tRNA(Tyr) + AMP + diphosphate + H(+). Its function is as follows. Catalyzes the attachment of tyrosine to tRNA(Tyr) in a two-step reaction: tyrosine is first activated by ATP to form Tyr-AMP and then transferred to the acceptor end of tRNA(Tyr). In Corynebacterium glutamicum (strain ATCC 13032 / DSM 20300 / JCM 1318 / BCRC 11384 / CCUG 27702 / LMG 3730 / NBRC 12168 / NCIMB 10025 / NRRL B-2784 / 534), this protein is Tyrosine--tRNA ligase.